Reading from the N-terminus, the 499-residue chain is MLGYNEKLVLLKLNEVKKARIEELVKLTGLEQVAIMRALLTLEKEGLAKISERKERIIRLTDLGRKYIQMGLPEIRALNVLKSKKKVKLDELRGVLTEDELKPIVGILRKEGWVKVEKTPEGLVLEITERGENPEERPIDKALKILSEKEYATSEEISKIVPINELKRRKVAQEEEVVERIAEITEKGVELVKKGIELKREVTSLTPELIASGKWREVEFKPFNIKAPVKKIYPGKKQPYRVFLDKIRRKLIEMGFIEITVDSLIETQFWNFDALFQPQNHPAREWTDTYQLKYPEKGYLPNRELVERVKEAHERGLAGSRGWGYVWSPERAMFLMPRAHATALSARQLAKGIEIPGKYFTIQRVFRPDVLDRTHLIEFNQIDGFVAAEDLTFRHLLGILKKFAIEIAGAKKVKFFPDYYPFTEPSVQLSAYHPELGWVEFGGAGVFREEMTKALGIDVPVIAWGIGIDRLAMFRLGIDDIRYLFSYDLKWLREAKLIW.

L-phenylalanine is bound by residues Thr-342, Gln-381–Asp-383, and Phe-422. Glu-424 lines the Mg(2+) pocket. Phe-447 lines the L-phenylalanine pocket.

It belongs to the class-II aminoacyl-tRNA synthetase family. Phe-tRNA synthetase alpha subunit type 2 subfamily. Tetramer of two alpha and two beta subunits. Requires Mg(2+) as cofactor.

The protein resides in the cytoplasm. The enzyme catalyses tRNA(Phe) + L-phenylalanine + ATP = L-phenylalanyl-tRNA(Phe) + AMP + diphosphate + H(+). The polypeptide is Phenylalanine--tRNA ligase alpha subunit (Pyrococcus furiosus (strain ATCC 43587 / DSM 3638 / JCM 8422 / Vc1)).